Here is a 1079-residue protein sequence, read N- to C-terminus: Eukaryotic translation initiation factor 5B (1079 aa).

A disordered region spans residues M1–S478. Residues S22–N38 are compositionally biased toward polar residues. The segment covering S57 to G67 has biased composition (basic residues). Phosphoserine is present on residues S73, S77, and S82. Positions K105–K114 are enriched in basic residues. A Phosphoserine modification is found at S127. A compositionally biased stretch (low complexity) spans N160–P169. Basic and acidic residues predominate over residues P173–K192. Basic residues predominate over residues L193–G204. Polar residues predominate over residues G207–K233. Over residues M253–R293 the composition is skewed to basic and acidic residues. Composition is skewed to low complexity over residues Q321 to E334 and R361 to S376. Phosphothreonine is present on T364. Residues E385 to E408 are compositionally biased toward basic and acidic residues. Positions N409–E431 are enriched in acidic residues. The span at V436–D466 shows a compositional bias: basic and acidic residues. In terms of domain architecture, tr-type G spans L482–S700. The G1 stretch occupies residues G491–T498. G491 to T498 provides a ligand contact to GTP. Residues G516–Q520 form a G2 region. The interval D555–G558 is G3. Positions N609–D612 are G4. A G5 region spans residues S677–Q679.

Belongs to the TRAFAC class translation factor GTPase superfamily. Classic translation factor GTPase family. IF-2 subfamily. Requires a monovalent cation as cofactor.

It is found in the cytoplasm. The enzyme catalyses GTP + H2O = GDP + phosphate + H(+). Plays a role in translation initiation. Translational GTPase that catalyzes the joining of the 40S and 60S subunits to form the 80S initiation complex with the initiator methionine-tRNA in the P-site base paired to the start codon. GTP binding and hydrolysis induces conformational changes in the enzyme that renders it active for productive interactions with the ribosome. The release of the enzyme after formation of the initiation complex is a prerequisite to form elongation-competent ribosomes. The protein is Eukaryotic translation initiation factor 5B of Schizosaccharomyces pombe (strain 972 / ATCC 24843) (Fission yeast).